We begin with the raw amino-acid sequence, 945 residues long: Microtubule cross-linking factor 3 (945 aa).

3 stretches are compositionally biased toward low complexity: residues 1–23 (MSQP…AAAT), 72–93 (QQQL…TSGT), and 110–126 (PKGA…GAEG). Residues 1-25 (MSQPPSGGAAPAATSASAAAAATEA) form the signal peptide. 4 disordered regions span residues 1 to 250 (MSQP…SYWK), 265 to 293 (KERA…PVAG), 307 to 366 (SPMA…TLKN), and 494 to 522 (LSLK…DNED). A compositionally biased stretch (basic and acidic residues) spans 141 to 151 (GQPEEAPREIE). Positions 164–179 (GGVGGGGEGGGAGGGP) are enriched in gly residues. Positions 219–235 (TAATSKTPGPGSRNSGS) are enriched in low complexity. Residues 236-247 (GSTGSGSGGGGS) are compositionally biased toward gly residues. Low complexity predominate over residues 328-345 (AMQAAAPPSSQPHSQQLQ). Residues 340–724 (HSQQLQEQED…GKVMQLQYEN (385 aa)) adopt a coiled-coil conformation. Basic and acidic residues-rich tracts occupy residues 353–366 (EMEK…TLKN) and 494–511 (LSLK…EKKA). A Phosphoserine modification is found at Ser-567. The disordered stretch occupies residues 741–811 (GIRGSPRDSD…PWPKSFSDRQ (71 aa)). The span at 745–766 (SPRDSDAESDAGKKESDDDSRP) shows a compositional bias: basic and acidic residues. Ser-779 is modified (phosphoserine). Residues 809-833 (DRQQMKDIRSEAERLGKTIDRLIAD) adopt a coiled-coil conformation. Residues 913-933 (PIILLILILVLFSSLSYTTIF) traverse the membrane as a helical segment.

This sequence belongs to the MTCL family.

The protein localises to the membrane. The sequence is that of Microtubule cross-linking factor 3 (Mtcl3) from Mus musculus (Mouse).